The sequence spans 86 residues: Omega-theraphotoxin-Hhn1f 1 (86 aa).

The first 21 residues, 1-21 (MKSIVFVALFGLALLAVVCSA), serve as a signal peptide directing secretion. A propeptide spanning residues 22–50 (SEDAHKELLKEVVRAMVVDKTDAVQAEER) is cleaved from the precursor. 3 disulfide bridges follow: cysteine 52–cysteine 66, cysteine 59–cysteine 71, and cysteine 65–cysteine 78.

Belongs to the neurotoxin 10 (Hwtx-1) family. 17 (Hntx-9) subfamily. Expressed by the venom gland.

The protein localises to the secreted. Functionally, ion channel inhibitor. The protein is Omega-theraphotoxin-Hhn1f 1 of Cyriopagopus hainanus (Chinese bird spider).